The chain runs to 349 residues: MTQAATRPTNDAGQDGGNNSDILVVARQQVLQRGEGLNQDQVLAVLQLPDDRLEELLALAHEVRMRWCGPEVEVEGIISLKTGGCPEDCHFCSQSGLFASPVRSAWLDIPSLVEAAKQTAKSGATEFCIVAAVRGPDERLMAQVAAGIEAIRNEVEINIACSLGMLTAEQVDQLAARGVHRYNHNLETARSFFANVVTTHTWEERWQTLSMVRDAGMEVCCGGILGMGETLQQRAEFAAELAELGPDEVPLNFLNPRPGTPFADLEVMPVGDALKAVAAFRLALPRTMLRFAGGREITLGDLGAKRGILGGINAVIVGNYLTTLGRPAEADLELLDELQMPLKALNASL.

The Radical SAM core domain occupies 70–295; the sequence is PEVEVEGIIS…RTMLRFAGGR (226 aa). 3 residues coordinate [4Fe-4S] cluster: Cys-85, Cys-89, and Cys-92. 4 residues coordinate [2Fe-2S] cluster: Cys-128, Cys-161, Cys-220, and Arg-290.

This sequence belongs to the radical SAM superfamily. Biotin synthase family. In terms of assembly, homodimer. The cofactor is [4Fe-4S] cluster. It depends on [2Fe-2S] cluster as a cofactor.

It catalyses the reaction (4R,5S)-dethiobiotin + (sulfur carrier)-SH + 2 reduced [2Fe-2S]-[ferredoxin] + 2 S-adenosyl-L-methionine = (sulfur carrier)-H + biotin + 2 5'-deoxyadenosine + 2 L-methionine + 2 oxidized [2Fe-2S]-[ferredoxin]. Its pathway is cofactor biosynthesis; biotin biosynthesis; biotin from 7,8-diaminononanoate: step 2/2. Functionally, catalyzes the conversion of dethiobiotin (DTB) to biotin by the insertion of a sulfur atom into dethiobiotin via a radical-based mechanism. This chain is Biotin synthase, found in Mycobacterium bovis (strain ATCC BAA-935 / AF2122/97).